The primary structure comprises 396 residues: Capsular polysaccharide biosynthesis protein CapF (396 aa).

The next 12 membrane-spanning stretches (helical) occupy residues 7-27 (YMFVANILSALCKFLILLVIV), 41-61 (ALVITAPIFLFISLKIRSVIV), 74-94 (AILSLNIITLIFVAIFVYVLG), 101-121 (ILIVSLIKLFENIKEVPYGIY), 129-149 (LLGISMGIYNILSLILFYIIY), 153-173 (HNLNMALLFLVISCIFSFAII), 198-218 (IFILTIPLAFSSALGSLNTGI), 232-252 (LGIFSTIAYVLVIGGLFANSI), 279-299 (MVFIGIFIGMCSVILSLFLGE), 315-335 (IILIILSFGLLFILSGIFLGT), 351-371 (LILLFCILIFSFLLIPKYSLL), and 372-392 (GAALTITISQFVALISYYYFY).

This sequence belongs to the polysaccharide synthase family.

It is found in the cell membrane. It functions in the pathway capsule biogenesis; capsule polysaccharide biosynthesis. Its function is as follows. Required for the biosynthesis of type 1 capsular polysaccharide. The chain is Capsular polysaccharide biosynthesis protein CapF (capF) from Staphylococcus aureus.